A 202-amino-acid polypeptide reads, in one-letter code: uncharacterized protein (202 aa).

The helical transmembrane segment at 10–30 (TAAIFLLCCTSVIILFTIAVV) threads the bilayer.

It belongs to the bacterial sugar transferase family.

The protein localises to the cell membrane. May be involved in the production of the exopolysaccharide (EPS) component of the extracellular matrix during biofilm formation. EPS is responsible for the adhesion of chains of cells into bundles. This is an uncharacterized protein from Bacillus subtilis (strain 168).